The following is a 249-amino-acid chain: tRNA pseudouridine synthase A (249 aa).

The Nucleophile role is filled by Asp-52. Residue Tyr-111 participates in substrate binding.

The protein belongs to the tRNA pseudouridine synthase TruA family. In terms of assembly, homodimer.

It carries out the reaction uridine(38/39/40) in tRNA = pseudouridine(38/39/40) in tRNA. Its function is as follows. Formation of pseudouridine at positions 38, 39 and 40 in the anticodon stem and loop of transfer RNAs. In Brachyspira hyodysenteriae (strain ATCC 49526 / WA1), this protein is tRNA pseudouridine synthase A.